A 233-amino-acid polypeptide reads, in one-letter code: Orotidine 5'-phosphate decarboxylase (233 aa).

Substrate-binding positions include Asp-11, Lys-34, 61 to 70, Thr-117, Arg-179, Gln-188, Gly-208, and Arg-209; that span reads DLKLHDIPNT. Lys-63 serves as the catalytic Proton donor.

Belongs to the OMP decarboxylase family. Type 1 subfamily. Homodimer.

The catalysed reaction is orotidine 5'-phosphate + H(+) = UMP + CO2. The protein operates within pyrimidine metabolism; UMP biosynthesis via de novo pathway; UMP from orotate: step 2/2. Functionally, catalyzes the decarboxylation of orotidine 5'-monophosphate (OMP) to uridine 5'-monophosphate (UMP). The chain is Orotidine 5'-phosphate decarboxylase from Streptococcus pneumoniae (strain JJA).